The chain runs to 56 residues: Large ribosomal subunit protein eL37 (56 aa).

Zn(2+) contacts are provided by Cys19, Cys22, Cys34, and Cys37. Residues Cys19–Cys37 form a C4-type zinc finger.

Belongs to the eukaryotic ribosomal protein eL37 family. It depends on Zn(2+) as a cofactor.

Its function is as follows. Binds to the 23S rRNA. The protein is Large ribosomal subunit protein eL37 (rpl37e) of Methanosarcina acetivorans (strain ATCC 35395 / DSM 2834 / JCM 12185 / C2A).